Here is a 454-residue protein sequence, read N- to C-terminus: tRNA modification GTPase MnmE (454 aa).

Positions 23, 80, and 120 each coordinate (6S)-5-formyl-5,6,7,8-tetrahydrofolate. Residues 216-377 enclose the TrmE-type G domain; that stretch reads GMKVVIAGRP…LRNHLKQSMG (162 aa). Residue N226 coordinates K(+). Residues 226 to 231, 245 to 251, 270 to 273, and 335 to 338 contribute to the GTP site; these read NAGKSS, TDIAGTT, DTAG, and NKAD. A Mg(2+)-binding site is contributed by S230. 3 residues coordinate K(+): T245, I247, and T250. T251 is a Mg(2+) binding site. K454 contributes to the (6S)-5-formyl-5,6,7,8-tetrahydrofolate binding site.

It belongs to the TRAFAC class TrmE-Era-EngA-EngB-Septin-like GTPase superfamily. TrmE GTPase family. As to quaternary structure, homodimer. Heterotetramer of two MnmE and two MnmG subunits. K(+) serves as cofactor.

It localises to the cytoplasm. In terms of biological role, exhibits a very high intrinsic GTPase hydrolysis rate. Involved in the addition of a carboxymethylaminomethyl (cmnm) group at the wobble position (U34) of certain tRNAs, forming tRNA-cmnm(5)s(2)U34. The protein is tRNA modification GTPase MnmE of Escherichia coli O157:H7.